We begin with the raw amino-acid sequence, 409 residues long: Translation initiation factor 2 subunit gamma (409 aa).

The tr-type G domain maps to Gln7 to Asp203. The G1 stretch occupies residues Gly16–Thr23. Mg(2+) is bound by residues Asp19, Thr23, Gly44, and Ser46. Asp19–Thr24 contributes to the GTP binding site. The segment at Gly44–Arg48 is G2. The interval Asp90–Gly93 is G3. GTP contacts are provided by residues Asn146–Asp149 and Ser181–Gln183. Residues Asn146–Asp149 are G4. The segment at Ser181–Gln183 is G5.

The protein belongs to the TRAFAC class translation factor GTPase superfamily. Classic translation factor GTPase family. EIF2G subfamily. As to quaternary structure, heterotrimer composed of an alpha, a beta and a gamma chain. The cofactor is Mg(2+).

The catalysed reaction is GTP + H2O = GDP + phosphate + H(+). Functionally, eIF-2 functions in the early steps of protein synthesis by forming a ternary complex with GTP and initiator tRNA. The protein is Translation initiation factor 2 subunit gamma of Natronomonas pharaonis (strain ATCC 35678 / DSM 2160 / CIP 103997 / JCM 8858 / NBRC 14720 / NCIMB 2260 / Gabara) (Halobacterium pharaonis).